A 120-amino-acid chain; its full sequence is Large ribosomal subunit protein uL18 (120 aa).

Belongs to the universal ribosomal protein uL18 family. As to quaternary structure, part of the 50S ribosomal subunit; part of the 5S rRNA/L5/L18/L25 subcomplex. Contacts the 5S and 23S rRNAs.

Its function is as follows. This is one of the proteins that bind and probably mediate the attachment of the 5S RNA into the large ribosomal subunit, where it forms part of the central protuberance. The sequence is that of Large ribosomal subunit protein uL18 from Janthinobacterium sp. (strain Marseille) (Minibacterium massiliensis).